Consider the following 213-residue polypeptide: Ras-related protein Rab-39B (213 aa).

The GTP site is built by serine 17, glycine 20, lysine 21, serine 22, cysteine 23, serine 37, and threonine 40. Residue serine 22 participates in Mg(2+) binding. A switch-I region spans residues 35-43; the sequence is QVSDPTVGV. Positions 40 and 64 each coordinate Mg(2+). GTP is bound by residues glycine 67, histidine 123, lysine 124, aspartate 126, alanine 154, and arginine 155. The switch-II stretch occupies residues 67–83; sequence GQERFRSITRAYYRNSV. Position 201 is a phosphoserine (serine 201). 2 S-geranylgeranyl cysteine lipidation sites follow: cysteine 211 and cysteine 213. At cysteine 213 the chain carries Cysteine methyl ester.

Belongs to the small GTPase superfamily. Rab family. As to quaternary structure, interacts (GDP-bound) with C9orf72; C9orf72 in complex with SMCR8 acts as a GEF for RAB39B. Interacts (in GTP-bound form) with PICK1 (via PDZ domain); a PICK1 homodimer may allow simultaneous association of RAB39B and GRIA2 to PICK1 which is involved in GRIA2 trafficking. Interacts with isoform c of RASSF1; the interaction is strong. Interacts with isoform a of RASSF1; the interaction is weak. Interacts with the DLG4/PSD-95. Interacts (GTP-bound) with HOPS complex components VPS39 and VPS41. Requires Mg(2+) as cofactor.

It localises to the cell membrane. The protein resides in the cytoplasmic vesicle membrane. It is found in the golgi apparatus. Its subcellular location is the cytoplasmic vesicle. The protein localises to the autophagosome membrane. It localises to the autolysosome membrane. It catalyses the reaction GTP + H2O = GDP + phosphate + H(+). With respect to regulation, regulated by guanine nucleotide exchange factors (GEFs) including C9orf72-SMCR8 complex, which promote the exchange of bound GDP for free GTP. Regulated by GTPase activating proteins (GAPs) which increase the GTP hydrolysis activity. Inhibited by GDP dissociation inhibitors (GDIs). In terms of biological role, the small GTPases Rab are key regulators of intracellular membrane trafficking, from the formation of transport vesicles to their fusion with membranes. Rabs cycle between an inactive GDP-bound form and an active GTP-bound form that is able to recruit to membranes different sets of downstream effectors directly responsible for vesicle formation, movement, tethering and fusion. RAB39B is involved in autophagy and may function in autophagosome formation. Binds downstream effector PICK1 to ensure selectively GRIA2 exit from the endoplasmic reticulum to the Golgi and to regulate AMPAR composition at the post-synapses and thus synaptic transmission. May regulate the homeostasis of SNCA/alpha-synuclein. The protein is Ras-related protein Rab-39B (RAB39B) of Bos taurus (Bovine).